The chain runs to 561 residues: Carbohydrate sulfotransferase 15 (561 aa).

The Cytoplasmic portion of the chain corresponds to 1–80 (MRHCINCCVQ…FLRFRKGKRC (80 aa)). Residues 81-101 (SLVFGLIIMTLVMASYILSGA) traverse the membrane as a helical; Signal-anchor for type II membrane protein segment. At 102-561 (HQELLISSPF…DDEAFAWKTT (460 aa)) the chain is on the lumenal side. 263-267 (KCGTT) lines the 3'-phosphoadenylyl sulfate pocket. A glycan (N-linked (GlcNAc...) asparagine) is linked at Asn364. Arg392 and Ser400 together coordinate 3'-phosphoadenylyl sulfate.

This sequence belongs to the sulfotransferase 1 family. As to quaternary structure, homodimer; disulfide-linked (Potential). The relevance of homodimerization is however unsure. May interact with phosphorylated proteins in resting B-cells, including HCK. The cofactor is a divalent metal cation. It depends on glutathione as a cofactor. Glycosylated.

The protein localises to the golgi apparatus membrane. It carries out the reaction dermatan 4'-sulfate + n 3'-phosphoadenylyl sulfate = dermatan 4',6'-bissulfate + n adenosine 3',5'-bisphosphate + n H(+). The catalysed reaction is chondroitin 4'-sulfate + n 3'-phosphoadenylyl sulfate = chondroitin 4',6'-bissulfate + n adenosine 3',5'-bisphosphate + n H(+). Inhibited by phenyl beta-GalNAc(4,6-SO(4)). Functionally, sulfotransferase that transfers sulfate from 3'-phosphoadenosine 5'-phosphosulfate (PAPS) to the C-6 hydroxyl group of the GalNAc 4-sulfate residue of chondroitin sulfate A and forms chondroitin sulfate E containing GlcA-GalNAc(4,6-SO(4)) repeating units. It also transfers sulfate to a unique non-reducing terminal sequence, GalNAc(4SO4)-GlcA(2SO4)-GalNAc(6SO4), to yield a highly sulfated structure similar to the structure found in thrombomodulin chondroitin sulfate. May also act as a B-cell receptor involved in BCR ligation-mediated early activation that mediate regulatory signals key to B-cell development and/or regulation of B-cell-specific RAG expression; however such results are unclear in vivo. This is Carbohydrate sulfotransferase 15 (Chst15) from Mus musculus (Mouse).